A 209-amino-acid chain; its full sequence is Large ribosomal subunit protein uL3 (209 aa).

Gln-150 bears the N5-methylglutamine mark.

This sequence belongs to the universal ribosomal protein uL3 family. Part of the 50S ribosomal subunit. Forms a cluster with proteins L14 and L19. In terms of processing, methylated by PrmB.

One of the primary rRNA binding proteins, it binds directly near the 3'-end of the 23S rRNA, where it nucleates assembly of the 50S subunit. The chain is Large ribosomal subunit protein uL3 from Vibrio cholerae serotype O1 (strain ATCC 39541 / Classical Ogawa 395 / O395).